The sequence spans 136 residues: Membrane-bound negative regulator YvrL (136 aa).

The next 4 helical transmembrane spans lie at 18 to 38, 46 to 66, 83 to 103, and 106 to 126; these read LLAA…LFSL, AAHV…FEPF, LFIL…AHTT, and LISD…VFLI.

The protein localises to the cell membrane. Negatively regulates RNA polymerase sigma factor SigO-dependent transcription. Prevents the expression or secretion of OxdC under nonstress conditions. May act as an anti-sigma factor. In Bacillus subtilis (strain 168), this protein is Membrane-bound negative regulator YvrL (yvrL).